Reading from the N-terminus, the 856-residue chain is TPR repeat-containing protein TP_0123 (856 aa).

TPR repeat units lie at residues 107 to 140, 523 to 556, and 603 to 636; these read YAAV…VADD, YRTF…AEQL, and TVSL…ALQY.

This is TPR repeat-containing protein TP_0123 from Treponema pallidum (strain Nichols).